Here is a 457-residue protein sequence, read N- to C-terminus: Bifunctional protein GlmU (457 aa).

The segment at 1 to 229 (MYNCAIILAA…YEEIMGVNSR (229 aa)) is pyrophosphorylase. Residues 8 to 11 (LAAG), K22, Q73, and 78 to 79 (GT) contribute to the UDP-N-acetyl-alpha-D-glucosamine site. D103 lines the Mg(2+) pocket. G140, E155, N170, and N227 together coordinate UDP-N-acetyl-alpha-D-glucosamine. Position 227 (N227) interacts with Mg(2+). The interval 230-250 (VQLSEAEIVMRKRINHKHMVN) is linker. The N-acetyltransferase stretch occupies residues 251-457 (GVTFIDCEST…WLDKKGLLKK (207 aa)). UDP-N-acetyl-alpha-D-glucosamine is bound by residues R332 and K350. The Proton acceptor role is filled by H362. Positions 365 and 376 each coordinate UDP-N-acetyl-alpha-D-glucosamine. Acetyl-CoA contacts are provided by residues 385–386 (NY), A422, and R439.

The protein in the N-terminal section; belongs to the N-acetylglucosamine-1-phosphate uridyltransferase family. This sequence in the C-terminal section; belongs to the transferase hexapeptide repeat family. In terms of assembly, homotrimer. Mg(2+) serves as cofactor.

The protein resides in the cytoplasm. The catalysed reaction is alpha-D-glucosamine 1-phosphate + acetyl-CoA = N-acetyl-alpha-D-glucosamine 1-phosphate + CoA + H(+). It catalyses the reaction N-acetyl-alpha-D-glucosamine 1-phosphate + UTP + H(+) = UDP-N-acetyl-alpha-D-glucosamine + diphosphate. The protein operates within nucleotide-sugar biosynthesis; UDP-N-acetyl-alpha-D-glucosamine biosynthesis; N-acetyl-alpha-D-glucosamine 1-phosphate from alpha-D-glucosamine 6-phosphate (route II): step 2/2. It participates in nucleotide-sugar biosynthesis; UDP-N-acetyl-alpha-D-glucosamine biosynthesis; UDP-N-acetyl-alpha-D-glucosamine from N-acetyl-alpha-D-glucosamine 1-phosphate: step 1/1. Its pathway is bacterial outer membrane biogenesis; LPS lipid A biosynthesis. Catalyzes the last two sequential reactions in the de novo biosynthetic pathway for UDP-N-acetylglucosamine (UDP-GlcNAc). The C-terminal domain catalyzes the transfer of acetyl group from acetyl coenzyme A to glucosamine-1-phosphate (GlcN-1-P) to produce N-acetylglucosamine-1-phosphate (GlcNAc-1-P), which is converted into UDP-GlcNAc by the transfer of uridine 5-monophosphate (from uridine 5-triphosphate), a reaction catalyzed by the N-terminal domain. This Clostridium botulinum (strain Loch Maree / Type A3) protein is Bifunctional protein GlmU.